Here is a 714-residue protein sequence, read N- to C-terminus: DNA ligase (714 aa).

NAD(+)-binding positions include 48–52 (DADYD), 97–98 (SL), and Glu-129. Lys-131 serves as the catalytic N6-AMP-lysine intermediate. NAD(+) contacts are provided by Arg-152, Glu-189, Lys-307, and Lys-331. Residues Cys-436, Cys-439, Cys-454, and Cys-460 each coordinate Zn(2+). In terms of domain architecture, BRCT spans 637–714 (KQDTAVAGKT…TEDEWLALIG (78 aa)).

The protein belongs to the NAD-dependent DNA ligase family. LigA subfamily. The cofactor is Mg(2+). Requires Mn(2+) as cofactor.

It carries out the reaction NAD(+) + (deoxyribonucleotide)n-3'-hydroxyl + 5'-phospho-(deoxyribonucleotide)m = (deoxyribonucleotide)n+m + AMP + beta-nicotinamide D-nucleotide.. Functionally, DNA ligase that catalyzes the formation of phosphodiester linkages between 5'-phosphoryl and 3'-hydroxyl groups in double-stranded DNA using NAD as a coenzyme and as the energy source for the reaction. It is essential for DNA replication and repair of damaged DNA. This Rhodopseudomonas palustris (strain BisB5) protein is DNA ligase.